Here is a 207-residue protein sequence, read N- to C-terminus: Small ribosomal subunit protein uS4c (207 aa).

The S4 RNA-binding domain maps to 92–153 (MRLDNILFRL…PKTYQSILSK (62 aa)).

Belongs to the universal ribosomal protein uS4 family. In terms of assembly, part of the 30S ribosomal subunit. Contacts protein S5. The interaction surface between S4 and S5 is involved in control of translational fidelity.

It is found in the plastid. The protein localises to the chloroplast. Its function is as follows. One of the primary rRNA binding proteins, it binds directly to 16S rRNA where it nucleates assembly of the body of the 30S subunit. In terms of biological role, with S5 and S12 plays an important role in translational accuracy. This Equisetum hyemale (Dutch rush) protein is Small ribosomal subunit protein uS4c (rps4).